A 414-amino-acid polypeptide reads, in one-letter code: Ornithine aminotransferase (414 aa).

A disulfide bridge links Cys-154 with Cys-163. Residue Lys-262 is modified to N6-(pyridoxal phosphate)lysine.

Belongs to the class-III pyridoxal-phosphate-dependent aminotransferase family. In terms of assembly, homodimer. The cofactor is pyridoxal 5'-phosphate. The disulfide bond between Cys-154 and Cys-163 is reduced by TRX1 which increases OAT catalytic activity.

Its subcellular location is the cytoplasm. The enzyme catalyses a 2-oxocarboxylate + L-ornithine = L-glutamate 5-semialdehyde + an L-alpha-amino acid. It carries out the reaction L-ornithine + 2-oxoglutarate = L-glutamate 5-semialdehyde + L-glutamate. The protein operates within amino-acid biosynthesis; L-proline biosynthesis; L-glutamate 5-semialdehyde from L-ornithine: step 1/1. With respect to regulation, unlike for mammalian OATs, activity is increased by TRX1-mediated reduction of the disulfide bond between Cys-154 and Cys-163. Binding to TRX1 may also induce conformational changes that facilitate substrate binding. Functionally, catalyzes the transamination of alpha-ketoglutarate with ornithine or N-acetylornithine and of glutamate-5-semialdehyde with glutamate and alanine. The protein is Ornithine aminotransferase of Plasmodium chabaudi chabaudi.